A 156-amino-acid chain; its full sequence is C-type lectin lectoxin-Phi1 (156 aa).

The signal sequence occupies residues 1–23; sequence MGRFIFVSLGLLVLAFSLSGIGA. Intrachain disulfides connect cysteine 27–cysteine 38, cysteine 55–cysteine 154, and cysteine 129–cysteine 146. Residues 34–155 form the C-type lectin domain; it reads HNVSCYKLIN…CNRRHRFLCK (122 aa). Asparagine 35 and asparagine 109 each carry an N-linked (GlcNAc...) asparagine glycan. Positions 119–121 match the Mannose-binding motif; the sequence is EPN. Positions 127, 142, and 143 each coordinate Ca(2+).

The protein belongs to the true venom lectin family. In terms of tissue distribution, expressed by the venom gland.

The protein resides in the secreted. Functionally, mannose-binding lectin which recognizes specific carbohydrate structures and agglutinates a variety of animal cells by binding to cell-surface glycoproteins and glycolipids. May be a calcium-dependent lectin. This chain is C-type lectin lectoxin-Phi1, found in Philodryas olfersii (Green snake).